Here is a 316-residue protein sequence, read N- to C-terminus: Pantothenate kinase (316 aa).

95 to 102 (GSVAVGKS) provides a ligand contact to ATP.

It belongs to the prokaryotic pantothenate kinase family.

The protein localises to the cytoplasm. The enzyme catalyses (R)-pantothenate + ATP = (R)-4'-phosphopantothenate + ADP + H(+). The protein operates within cofactor biosynthesis; coenzyme A biosynthesis; CoA from (R)-pantothenate: step 1/5. The sequence is that of Pantothenate kinase from Shewanella halifaxensis (strain HAW-EB4).